Reading from the N-terminus, the 1491-residue chain is Copper-transporting ATPase 1 (1491 aa).

Residues 1 to 644 (MEPSVDANSI…KREIKQWRGS (644 aa)) lie on the Cytoplasmic side of the membrane. 2 HMA domains span residues 8–74 (NSIT…FDAL) and 85–151 (TNTV…LDMG). Residues threonine 18, cysteine 19, and cysteine 22 each contribute to the Cu(+) site. Threonine 152 bears the Phosphothreonine mark. The HMA 3 domain occupies 171–237 (VMLKMKVEGM…QIEAVGFPAF (67 aa)). Cu(+)-binding residues include cysteine 182 and cysteine 185. The residue at position 270 (serine 270) is a Phosphoserine. Residues 277–343 (STTMFTIEGM…AIEAISPGQY (67 aa)) enclose the HMA 4 domain. Positions 288 and 291 each coordinate Cu(+). Threonine 327 bears the Phosphothreonine mark. Serine 339, serine 353, serine 357, and serine 362 each carry phosphoserine. 3 consecutive HMA domains span residues 377-443 (QEAV…FDAA), 479-545 (NKCY…FGAM), and 555-621 (GILE…FEAS). 6 residues coordinate Cu(+): cysteine 388, cysteine 391, cysteine 490, cysteine 493, cysteine 566, and cysteine 569. A helical transmembrane segment spans residues 645–666 (FLVSLFFCIPVMGLMVYMMVMD). At 667-705 (HHLATLHHNQNMSNEEMINMHSAMFLERQILPGLSIMNL) the chain is on the extracellular side. Asparagine 677 carries an N-linked (GlcNAc...) asparagine glycan. Residues 706-725 (LSLLLCLPVQFCGGWYFYIQ) traverse the membrane as a helical segment. Topologically, residues 726–732 (AYKALKH) are cytoplasmic. A helical membrane pass occupies residues 733 to 753 (KTANMDVLIVLATTIAFAYSL). Residues 754 to 772 (VILLVAMFERAKVNPITFF) are Extracellular-facing. The chain crosses the membrane as a helical span at residues 773-793 (DTPPMLFVFIALGRWLEHIAK). Topologically, residues 794 to 926 (GKTSEALAKL…SKAPIQQFAD (133 aa)) are cytoplasmic. Residues 927 to 950 (KLSGYFVPFIVLVSIVTLLVWIII) form a helical membrane-spanning segment. The Extracellular portion of the chain corresponds to 951–980 (GFQNFEIVETYFPGYNRSISRTETIIRFAF). Asparagine 966 carries N-linked (GlcNAc...) asparagine glycosylation. Residues 981 to 1002 (QASITVLCIACPCSLGLATPTA) form a helical membrane-spanning segment. Over 1003 to 1347 (VMVGTGVGAQ…LSRKTVKRIR (345 aa)) the chain is Cytoplasmic. Aspartate 1035 functions as the 4-aspartylphosphate intermediate in the catalytic mechanism. Position 1072 (glutamate 1072) interacts with ATP. Threonine 1203 bears the Phosphothreonine mark. The Mg(2+) site is built by aspartate 1292 and aspartate 1296. A helical transmembrane segment spans residues 1348–1365 (INFVFALIYNLVGIPIAA). The Extracellular portion of the chain corresponds to 1366–1376 (GVFLPIGLVLQ). A helical transmembrane segment spans residues 1377 to 1396 (PWMGSAAMAASSVSVVLSSL). Residues 1397-1491 (FLKLYRKPTY…DFREDDDTTL (95 aa)) are Cytoplasmic-facing. Phosphoserine is present on residues serine 1421, serine 1423, serine 1451, serine 1454, and serine 1457. Positions 1458 to 1459 (LL) match the Endocytosis signal motif. Serine 1460, serine 1464, serine 1467, and serine 1477 each carry phosphoserine. Residues 1477-1491 (SLLVGDFREDDDTTL) form a PDZD11-binding region. The Endocytosis signal motif lies at 1478–1479 (LL).

It belongs to the cation transport ATPase (P-type) (TC 3.A.3) family. Type IB subfamily. As to quaternary structure, monomer. Interacts with PDZD11. Interacts with ATOX1 and COMMD1. Interacts with TYRP1. Directly interacts with SOD3; this interaction is copper-dependent and is required for SOD3 activity. As to expression, widely expressed. Highly expressed in pituitary endocrine cells. Expressed in melanocytes (at protein level). Expressed in motor neuron (at protein level). Expressed in hippocampal neuron (at protein level). In the kidney, it is detected in the proximal and distal tubules (at protein level). Expressed in aorta (at protein level).

The protein resides in the golgi apparatus. Its subcellular location is the trans-Golgi network membrane. It localises to the cell membrane. The protein localises to the melanosome membrane. It is found in the early endosome membrane. The protein resides in the cell projection. Its subcellular location is the axon. It localises to the dendrite. The protein localises to the postsynaptic density. It catalyses the reaction Cu(+)(in) + ATP + H2O = Cu(+)(out) + ADP + phosphate + H(+). In terms of biological role, ATP-driven copper (Cu(+)) ion pump that plays an important role in intracellular copper ion homeostasis. Within a catalytic cycle, acquires Cu(+) ion from donor protein on the cytoplasmic side of the membrane and delivers it to acceptor protein on the lumenal side. The transfer of Cu(+) ion across the membrane is coupled to ATP hydrolysis and is associated with a transient phosphorylation that shifts the pump conformation from inward-facing to outward-facing state. Under physiological conditions, at low cytosolic copper concentration, it is localized at the trans-Golgi network (TGN) where it transfers Cu(+) ions to cuproenzymes of the secretory pathway. Upon elevated cytosolic copper concentrations, it relocalizes to the plasma membrane where it is responsible for the export of excess Cu(+) ions. May play a dual role in neuron function and survival by regulating cooper efflux and neuronal transmission at the synapse as well as by supplying Cu(+) ions to enzymes such as PAM, TYR and SOD3. In the melanosomes of pigmented cells, provides copper cofactor to TYR to form an active TYR holoenzyme for melanin biosynthesis. The chain is Copper-transporting ATPase 1 from Mus musculus (Mouse).